The following is a 589-amino-acid chain: MQSADSQNTPKRPRRDGSPRTPPDSPLADAETSPSHDLDPDYRTWGPEQVWSFLRRCGFSDSELLKRCREKRMSGSLLPFPEDLGISSHGKKMKLLNCIQDTMKVINDPIHGHIEFHPLLMRIIDTPQFQRLRYIKQLGGGYYVFPGASHNRFEHSLGVGYLAGRLVRELSEKQPELQISERDILCVQIAGLCHDLGHGPFSHMFDGRFIPLARPEIKWTHEQGSVMMFEHLINSNGLQDVMKYYGLIPEEDILFIKEQITGPPESPIKDASKWLYKGRPKEKSFLYEIVANKRNGIDVDKWDYFARDCHHLGIQNSFDYKRFLKFARVCEVDNMKHICTREKEVGNLYDMFHTRNCLHRRAYQHKVGNIIDTMITDAFLKADDHIEITGSAGRKYHISTAIDDMEAFTKLTDNIFLEILYSTDPNLNDARMILKKIESRNLYKFVGETQPMIQRIKKENYEHLPNEVASAKPSDVELEAELKAEDLIVDVINMDYGMEDKNPIDHVRFYCKSDLSKAVMITRNQVSQFLPETFAEQLIRVYCKKTDEKTLFAARQHFVHWCLINDFTKPQIKKLPLRKLKKELTTATG.

Met1 bears the N-acetylmethionine mark. The span at 1–10 (MQSADSQNTP) shows a compositional bias: polar residues. The segment at 1–41 (MQSADSQNTPKRPRRDGSPRTPPDSPLADAETSPSHDLDPD) is disordered. Ser18 carries the phosphoserine modification. Thr21 carries the phosphothreonine modification. Ser33 and Ser88 each carry phosphoserine. Residues 45–100 (WGPEQVWSFLRRCGFSDSELLKRCREKRMSGSLLPFPEDLGISSHGKKMKLLNCIQ) enclose the SAM domain. Residues Lys104 and Val105 each coordinate GTP. Asn107 is a dGTP binding site. Positions 125, 130, and 133 each coordinate GTP. DGTP contacts are provided by Gln137, Leu138, Val144, and Arg152. DATP is bound at residue Gln137. A dCTP-binding site is contributed by Gln137. Gln137 is a dTTP binding site. Position 152 (Arg152) interacts with dATP. Arg152 provides a ligand contact to dCTP. Residue Arg152 coordinates dTTP. The 126-residue stretch at 152-277 (RFEHSLGVGY…IKDASKWLYK (126 aa)) folds into the HD domain. Mn(2+) contacts are provided by His155, His194, and Asp195. DATP-binding residues include His198 and His203. DCTP contacts are provided by His198 and His203. Positions 198 and 203 each coordinate dTTP. Residue His221 is part of the active site. Residue Asp300 participates in Mn(2+) binding. DGTP-binding residues include Lys301, Tyr304, Asp308, Arg322, Arg341, Lys343, Asn347, Arg355, Tyr363, Gln364, His365, and Lys366. 3 residues coordinate dATP: Lys301, Tyr304, and Asp308. DCTP contacts are provided by Lys301, Tyr304, and Asp308. Residues Lys301, Tyr304, and Asp308 each coordinate dTTP. Arg355 contacts dATP. Position 355 (Arg355) interacts with dCTP. A dATP-binding site is contributed by Gln364. Residue Gln364 coordinates dCTP. DTTP is bound at residue Gln364. Residues Arg440 and Lys444 each contribute to the GTP site. A Glycyl lysine isopeptide (Lys-Gly) (interchain with G-Cter in SUMO2) cross-link involves residue Lys457. Lys512 contacts GTP. Lys512 provides a ligand contact to dGTP.

Belongs to the SAMHD1 family. In terms of assembly, homodimer; in absence of GTP and dNTP. Homotetramer; in GTP- and dNTP-bound form. Interacts with MRE11; leading to stimulate the exonuclease activity of MRE11. Interacts with RBBP8/CtIP. Interacts (via its C-terminus) with CD81. The cofactor is Zn(2+).

It localises to the nucleus. Its subcellular location is the chromosome. It carries out the reaction a 2'-deoxyribonucleoside 5'-triphosphate + H2O = a 2'-deoxyribonucleoside + triphosphate + H(+). The catalysed reaction is dATP + H2O = 2'-deoxyadenosine + triphosphate + H(+). It catalyses the reaction dCTP + H2O = 2'-deoxycytidine + triphosphate + H(+). The enzyme catalyses dGTP + H2O = 2'-deoxyguanosine + triphosphate + H(+). It carries out the reaction dTTP + H2O = thymidine + triphosphate + H(+). Its activity is regulated as follows. Allosterically activated and regulated via the combined actions of GTP and dNTPs (dATP, dGTP, dTTP and dCTP): Allosteric site 1 binds GTP, while allosteric site 2 binds dNTP. Allosteric activation promotes the formation of highly active homotetramers. Its function is as follows. Protein that acts both as a host restriction factor involved in defense response to virus and as a regulator of DNA end resection at stalled replication forks. Has deoxynucleoside triphosphate (dNTPase) activity, which is required to restrict infection by viruses: dNTPase activity reduces cellular dNTP levels to levels too low for retroviral reverse transcription to occur, blocking early-stage virus replication in dendritic and other myeloid cells. Likewise, suppresses LINE-1 retrotransposon activity. In addition to virus restriction, dNTPase activity acts as a regulator of DNA precursor pools by regulating dNTP pools. Functions during S phase at stalled DNA replication forks to promote the resection of gapped or reversed forks: acts by stimulating the exonuclease activity of MRE11, activating the ATR-CHK1 pathway and allowing the forks to restart replication. Its ability to promote degradation of nascent DNA at stalled replication forks is required to prevent induction of type I interferons, thereby preventing chronic inflammation. Ability to promote DNA end resection at stalled replication forks is independent of dNTPase activity. Enhances immunoglobulin hypermutation in B-lymphocytes by promoting transversion mutation. The sequence is that of Deoxynucleoside triphosphate triphosphohydrolase SAMHD1 from Bos taurus (Bovine).